The primary structure comprises 207 residues: LexA repressor (207 aa).

The H-T-H motif DNA-binding region spans 28-48; that stretch reads RAEISRELGFKSANAAEEHLK. Catalysis depends on for autocatalytic cleavage activity residues S123 and K160.

It belongs to the peptidase S24 family. As to quaternary structure, homodimer.

It catalyses the reaction Hydrolysis of Ala-|-Gly bond in repressor LexA.. In terms of biological role, represses a number of genes involved in the response to DNA damage (SOS response), including recA and lexA. In the presence of single-stranded DNA, RecA interacts with LexA causing an autocatalytic cleavage which disrupts the DNA-binding part of LexA, leading to derepression of the SOS regulon and eventually DNA repair. The protein is LexA repressor of Haemophilus influenzae (strain 86-028NP).